The chain runs to 1873 residues: Voltage-dependent L-type calcium channel subunit alpha-1S (1873 aa).

The segment at 1–23 (MEPSSPQDEGLRKKQPKKPVPEI) is disordered. Topologically, residues 1–51 (MEPSSPQDEGLRKKQPKKPVPEILPRPPRALFCLTLENPLRKACISIVEWK) are cytoplasmic. The stretch at 38 to 337 (NPLRKACISI…LVLGVLSGEF (300 aa)) is one I repeat. The chain crosses the membrane as a helical span at residues 52-70 (PFETIILLTIFANCVALAV). At 71-85 (YLPMPEDDNNSLNLG) the chain is on the extracellular side. Asn79 carries N-linked (GlcNAc...) asparagine glycosylation. The chain crosses the membrane as a helical span at residues 86–106 (LEKLEYFFLIVFSIEAAMKII). Topologically, residues 107 to 115 (AYGFLFHQD) are cytoplasmic. Residues 116–136 (AYLRSGWNVLDFTIVFLGVFT) form a helical membrane-spanning segment. The Extracellular portion of the chain corresponds to 137 to 160 (VILEQVNVIQSHTAPMSSKGAGLD). The chain crosses the membrane as a helical span at residues 161–179 (VKALRAFRVLRPLRLVSGV). The Cytoplasmic segment spans residues 180 to 196 (PSLQVVLNSIFKAMLPL). A helical membrane pass occupies residues 197–218 (FHIALLVLFMVIIYAIIGLELF). At 219 to 279 (KGKMHKTCYF…HGITHFDNFG (61 aa)) the chain is on the extracellular side. Intrachain disulfides connect Cys226–Cys254 and Cys245–Cys261. A glycan (N-linked (GlcNAc...) asparagine) is linked at Asn257. The pore-forming intramembrane region spans 280–301 (FSMLTVYQCITMEGWTDVLYWV). Residues 290-293 (TMEG) carry the Selectivity filter of repeat I motif. Glu292 provides a ligand contact to Ca(2+). Over 302 to 309 (NDAIGNEW) the chain is Extracellular. The chain crosses the membrane as a helical span at residues 310–330 (PWIYFVTLILLGSFFILNLVL). At 331–432 (GVLSGEFTKE…WKCHDIVKSK (102 aa)) the chain is on the cytoplasmic side. The interval 357-374 (QQLDEDLRGYMSWITQGE) is binding to the beta subunit. Phosphoserine is present on residues Ser393 and Ser397. An II repeat occupies 418-664 (NRIFRWKCHD…VFLAIAVDNL (247 aa)). The chain crosses the membrane as a helical span at residues 433–451 (VFYWLVILIVALNTLSIAS). The Extracellular segment spans residues 452-462 (EHHNQPLWLTR). Residues 463–483 (LQDIANRVLLSLFTTEMLMKM) traverse the membrane as a helical segment. Residues 484–494 (YGLGLRQYFMS) lie on the Cytoplasmic side of the membrane. The chain crosses the membrane as a helical span at residues 495–514 (IFNRFDCFVVCSGILEILLV). Topologically, residues 515–523 (ESGAMTPLG) are extracellular. A helical membrane pass occupies residues 524–542 (ISVLRCIRLLRIFKITKYW). Residues 543-561 (TSLSNLVASLLNSIRSIAS) are Cytoplasmic-facing. The helical transmembrane segment at 562-581 (LLLLLFLFIVIFALLGMQLF) threads the bilayer. Topologically, residues 582–601 (GGRYDFEDTEVRRSNFDNFP) are extracellular. Residues 602 to 623 (QALISVFQVLTGEDWTSMMYNG) constitute an intramembrane region (pore-forming). A Selectivity filter of repeat II motif is present at residues 612–615 (TGED). A Ca(2+)-binding site is contributed by Glu614. The Extracellular portion of the chain corresponds to 624-633 (IMAYGGPSYP). The helical transmembrane segment at 634–653 (GMLVCIYFIILFVCGNYILL) threads the bilayer. Residues 654–799 (NVFLAIAVDN…VLCHRIVNAT (146 aa)) are Cytoplasmic-facing. Disordered stretches follow at residues 675–717 (KAKA…IPTT) and 731–757 (EVKD…LSPR). Position 687 is a phosphoserine; by PKA (Ser687). A compositionally biased stretch (basic and acidic residues) spans 690–711 (LPDKSEEEKSTMAKKLEQKPKG). A compositionally biased stretch (acidic residues) spans 742–751 (PGDDEEDEPE). Residues 747–760 (EDEPEIPLSPRPRP) form an interaction with STAC, STAC2 and STAC3 (via SH3 domains) region. One copy of the III repeat lies at 786 to 1068 (NKIRVLCHRI…IFVGFVIVTF (283 aa)). The chain crosses the membrane as a helical span at residues 800–818 (WFTNFILLFILLSSAALAA). The Extracellular portion of the chain corresponds to 819–830 (EDPIRADSMRNQ). Residues 831-850 (ILKHFDIGFTSVFTVEIVLK) form a helical membrane-spanning segment. At 851 to 866 (MTTYGAFLHKGSFCRN) the chain is on the cytoplasmic side. Residues 867–885 (YFNMLDLLVVAVSLISMGL) traverse the membrane as a helical segment. Residues 886–892 (ESSAISV) are Extracellular-facing. Residues 893-911 (VKILRVLRVLRPLRAINRA) traverse the membrane as a helical segment. Topologically, residues 912-930 (KGLKHVVQCMFVAISTIGN) are cytoplasmic. Residues 931 to 950 (IVLVTTLLQFMFACIGVQLF) traverse the membrane as a helical segment. At 951 to 1000 (KGKFFRCTDLSKMTEEECRGYYYVYKDGDPMQIELRHREWVHSDFHFDNV) the chain is on the extracellular side. Cys957 and Cys968 are oxidised to a cystine. Residues 988–1077 (REWVHSDFHF…FQEQGETEYK (90 aa)) form a dihydropyridine binding region. The pore-forming intramembrane region spans 1001 to 1021 (LSAMMSLFTVSTFEGWPQLLY). A Selectivity filter of repeat III motif is present at residues 1012–1015 (TFEG). A Ca(2+)-binding site is contributed by Glu1014. The Extracellular segment spans residues 1022–1038 (KAIDSNAEDVGPIYNNR). Residues 1039-1060 (VEMAIFFIIYIILIAFFMMNIF) form a helical membrane-spanning segment. Topologically, residues 1061–1118 (VGFVIVTFQEQGETEYKNCELDKNQRQCVQYALKARPLRCYIPKNPYQYQVWYIVTSS) are cytoplasmic. One copy of the IV repeat lies at 1105-1384 (NPYQYQVWYI…LFVAVIMDNF (280 aa)). A helical membrane pass occupies residues 1119-1140 (YFEYLMFALIMLNTICLGMQHY). Asn1141 is a glycosylation site (N-linked (GlcNAc...) asparagine). Residues 1141 to 1148 (NQSEQMNH) are Extracellular-facing. Residues 1149–1170 (ISDILNVAFTIIFTLEMILKLM) traverse the membrane as a helical segment. Over 1171-1180 (AFKARGYFGD) the chain is Cytoplasmic. A helical membrane pass occupies residues 1181–1200 (PWNVFDFLIVIGSIIDVILS). Over 1201–1231 (EIDTFLASSGGLYCLGGGCGNVDPDESARIS) the chain is Extracellular. Residues 1232 to 1250 (SAFFRLFRVMRLIKLLSRA) form a helical membrane-spanning segment. Residues 1251–1268 (EGVRTLLWTFIKSFQALP) are Cytoplasmic-facing. The chain crosses the membrane as a helical span at residues 1269–1289 (YVALLIVMLFFIYAVIGMQMF). Topologically, residues 1290–1311 (GKIALVDGTQINRNNNFQTFPQ) are extracellular. Residues 1312–1330 (AVLLLFRCATGEAWQEILL) constitute an intramembrane region (pore-forming). The short motif at 1321–1324 (TGEA) is the Selectivity filter of repeat IV element. The Extracellular portion of the chain corresponds to 1331 to 1356 (ACSYGKLCDPESDYAPGEEYTCGTNF). The dihydropyridine binding stretch occupies residues 1337–1403 (LCDPESDYAP…LGPHHLDEFK (67 aa)). Residues Cys1338 and Cys1352 are joined by a disulfide bond. The tract at residues 1349 to 1391 (EYTCGTNFAYYYFISFYMLCAFLVINLFVAVIMDNFDYLTRDW) is phenylalkylamine binding. Residues 1357–1381 (AYYYFISFYMLCAFLVINLFVAVIM) form a helical membrane-spanning segment. Topologically, residues 1382 to 1873 (DNFDYLTRDW…SQETLIPPRL (492 aa)) are cytoplasmic. The tract at residues 1522 to 1542 (KFYATFLIQEHFRKFMKRQEE) is interaction with calmodulin. Phosphoserine; by PKA and CAMK2 is present on Ser1575. Ser1617 bears the Phosphoserine; by PKA mark. The disordered stretch occupies residues 1731-1780 (MPRGQAPPAPCQCPRVESSMPEDRKSSTPGSLHEETPHSRSTRENTSRCS). Over residues 1751–1776 (PEDRKSSTPGSLHEETPHSRSTRENT) the composition is skewed to basic and acidic residues.

It belongs to the calcium channel alpha-1 subunit (TC 1.A.1.11) family. CACNA1S subfamily. Component of a calcium channel complex consisting of a pore-forming alpha subunit (CACNA1S) and the ancillary subunits CACNB1 or CACNB2, CACNG1 and CACNA2D1. The channel complex contains alpha, beta, gamma and delta subunits in a 1:1:1:1 ratio, i.e. it contains either CACNB1 or CACNB2. CACNA1S channel activity is modulated by the auxiliary subunits (CACNB1 or CACNB2, CACNG1 and CACNA2D1). Interacts with DYSF and JSRP1. Interacts with RYR1. Interacts with STAC, STAC2 and STAC3 (via their SH3 domains). Interacts with CALM. Post-translationally, the alpha-1S subunit is found in two isoforms in the skeletal muscle: a minor form of 212 kDa containing the complete amino acid sequence, and a major form of 190 kDa derived from the full-length form by post-translational proteolysis close to Phe-1690. Phosphorylated. Phosphorylation by PKA activates the calcium channel. Both the minor and major forms are phosphorylated in vitro by PKA. Phosphorylation at Ser-1575 is involved in beta-adrenergic-mediated regulation of the channel. In terms of tissue distribution, skeletal muscle specific.

The protein resides in the cell membrane. The protein localises to the sarcolemma. Its subcellular location is the T-tubule. The enzyme catalyses Ca(2+)(in) = Ca(2+)(out). Channel activity is blocked by dihydropyridines (DHP), phenylalkylamines, and by benzothiazepines. In terms of biological role, pore-forming, alpha-1S subunit of the voltage-gated calcium channel that gives rise to L-type calcium currents in skeletal muscle. Calcium channels containing the alpha-1S subunit play an important role in excitation-contraction coupling in skeletal muscle via their interaction with RYR1, which triggers Ca(2+) release from the sarcoplasmic reticulum and ultimately results in muscle contraction. Long-lasting (L-type) calcium channels belong to the 'high-voltage activated' (HVA) group. This Homo sapiens (Human) protein is Voltage-dependent L-type calcium channel subunit alpha-1S (CACNA1S).